A 149-amino-acid polypeptide reads, in one-letter code: Protein SprT-like (149 aa).

In terms of domain architecture, SprT-like spans 4–143; it reads TDYVKQVSLE…CGLCRGKLLL (140 aa). Histidine 64 is a Zn(2+) binding site. Residue glutamate 65 is part of the active site. Histidine 68 serves as a coordination point for Zn(2+).

Belongs to the SprT family. Zn(2+) is required as a cofactor.

It is found in the cytoplasm. The chain is Protein SprT-like from Streptococcus pneumoniae (strain JJA).